The following is a 479-amino-acid chain: Putative F-box protein At1g67390 (479 aa).

The F-box domain occupies aspartate 40 to leucine 88.

This Arabidopsis thaliana (Mouse-ear cress) protein is Putative F-box protein At1g67390.